Reading from the N-terminus, the 288-residue chain is MGNLFCCVQVDQSTVAIREQFGKFDAVLEPGCHCLPWFAGKRIAGHLTLRLQQLDVRCETKTKDNVFVNVVASIQYRALAGKANDAFYKLSNTRSQIQAYVFDVIRASVPKLNLDDAFEQKNDIAKAVEDELEKAMSAYGFEIVQTLIVDIEPDEHVKRAMNEINAAARLRVAANEKAEAEKIVQIKRAEGEAEAKYLSGLGIARQRQAIVDGLRDSVLGFSVNVPGTTAKDVMDMVLITQYFDTMKEIGASSKASSVFIPHGPGAVRDIATQIRDGLLQGQATTTSH.

Gly-2 carries N-myristoyl glycine lipidation.

In terms of biological role, positive regulator of hypersensitive response (HR)-like cell death. May be involved in potassium ion channel regulation. This chain is Hypersensitive-induced response protein-like protein 1, found in Oryza sativa subsp. japonica (Rice).